A 906-amino-acid polypeptide reads, in one-letter code: Cadherin-2 (906 aa).

An N-terminal signal peptide occupies residues 1–25 (MCRIAGAPRTLLPLLAALLQASVEA). Residues 26-159 (SGEIALCKTG…HSGHLQRQKR (134 aa)) constitute a propeptide that is removed on maturation. S96 and S135 each carry phosphoserine. Cadherin domains follow at residues 160–267 (DWVI…RPEF), 268–382 (LHQV…PPEF), 383–497 (TAMT…NPYF), 498–603 (APNP…DNAP), and 604–714 (QVLP…DVDR). Residues 160 to 724 (DWVIPPINLP…IVGAGLGTGA (565 aa)) are Extracellular-facing. Position 170 (E170) interacts with Ca(2+). A glycan (N-linked (GlcNAc...) asparagine) is linked at N190. Residues D226, E228, D259, M260, N261, D262, and N263 each contribute to the Ca(2+) site. A glycan (N-linked (GlcNAc...) asparagine) is linked at N273. Positions 293, 295, and 301 each coordinate Ca(2+). Residue N325 is glycosylated (N-linked (GlcNAc...) asparagine). Ca(2+) is bound at residue D353. 5 N-linked (GlcNAc...) asparagine glycosylation sites follow: N402, N572, N622, N651, and N692. A helical transmembrane segment spans residues 725–745 (IIAILLCIIILLILVLMFVVW). Topologically, residues 746–906 (MKRRDKERQA…LADMYGGGDD (161 aa)) are cytoplasmic. A compositionally biased stretch (low complexity) spans 863 to 880 (SGSTAGSLSSLNSSSSGG). The interval 863–884 (SGSTAGSLSSLNSSSSGGEQDY) is disordered.

As to quaternary structure, homodimer (via extracellular region). Can also form heterodimers with other cadherins (via extracellular region). Dimerization occurs in trans, i.e. with a cadherin chain from another cell. Interacts with CDCP1. Interacts with PCDH8; this complex may also include TAOK2. The interaction with PCDH8 may lead to internalization through TAOK2/p38 MAPK pathway. Identified in a complex containing FGFR4, NCAM1, CDH2, PLCG1, FRS2, SRC, SHC1, GAP43 and CTTN. May interact with OBSCN (via protein kinase domain 2). Interacts with FBXO45. Post-translationally, cleaved by MMP24. Ectodomain cleavage leads to the generation of a soluble 90 kDa N-terminal soluble fragment and a 45 kDa membrane-bound C-terminal fragment 1 (CTF1), which is further cleaved by gamma-secretase into a 35 kDa. Cleavage in neural stem cells by MMP24 affects CDH2-mediated anchorage of neural stem cells to ependymocytes in the adult subependymal zone, leading to modulate neural stem cell quiescence.

The protein resides in the cell membrane. Its subcellular location is the sarcolemma. It localises to the cell junction. It is found in the cell surface. The protein localises to the desmosome. The protein resides in the adherens junction. Its function is as follows. Calcium-dependent cell adhesion protein; preferentially mediates homotypic cell-cell adhesion by dimerization with a CDH2 chain from another cell. Cadherins may thus contribute to the sorting of heterogeneous cell types. Acts as a regulator of neural stem cells quiescence by mediating anchorage of neural stem cells to ependymocytes in the adult subependymal zone: upon cleavage by MMP24, CDH2-mediated anchorage is affected, leading to modulate neural stem cell quiescence. Plays a role in cell-to-cell junction formation between pancreatic beta cells and neural crest stem (NCS) cells, promoting the formation of processes by NCS cells. Required for proper neurite branching. Required for pre- and postsynaptic organization. CDH2 may be involved in neuronal recognition mechanism. In hippocampal neurons, may regulate dendritic spine density. This chain is Cadherin-2 (CDH2), found in Callithrix jacchus (White-tufted-ear marmoset).